The primary structure comprises 545 residues: Chaperonin GroEL (545 aa).

Residues 29-32 (TLGP), K50, 86-90 (DGTTT), G415, and D495 each bind ATP.

It belongs to the chaperonin (HSP60) family. In terms of assembly, forms a cylinder of 14 subunits composed of two heptameric rings stacked back-to-back. Interacts with the co-chaperonin GroES.

The protein localises to the cytoplasm. The enzyme catalyses ATP + H2O + a folded polypeptide = ADP + phosphate + an unfolded polypeptide.. Functionally, together with its co-chaperonin GroES, plays an essential role in assisting protein folding. The GroEL-GroES system forms a nano-cage that allows encapsulation of the non-native substrate proteins and provides a physical environment optimized to promote and accelerate protein folding. This Porphyromonas gingivalis (strain ATCC BAA-308 / W83) protein is Chaperonin GroEL.